The chain runs to 124 residues: Large ribosomal subunit protein bL12 (124 aa).

The protein belongs to the bacterial ribosomal protein bL12 family. In terms of assembly, homodimer. Part of the ribosomal stalk of the 50S ribosomal subunit. Forms a multimeric L10(L12)X complex, where L10 forms an elongated spine to which 2 to 4 L12 dimers bind in a sequential fashion. Binds GTP-bound translation factors.

Functionally, forms part of the ribosomal stalk which helps the ribosome interact with GTP-bound translation factors. Is thus essential for accurate translation. The sequence is that of Large ribosomal subunit protein bL12 from Desulforamulus reducens (strain ATCC BAA-1160 / DSM 100696 / MI-1) (Desulfotomaculum reducens).